The sequence spans 118 residues: MRHNHGYRKLGRTSSHRAALLKNLTIAIVKAGKIETTLPKAKELRGYVEKLITRARKGDFNAHKFVFAHLQDKEATNMLVTEIAPKYATRNGGYTRIIKTRVRKGDAAEMAYIELVAQ.

It belongs to the bacterial ribosomal protein bL17 family. As to quaternary structure, part of the 50S ribosomal subunit. Contacts protein L32.

This Campylobacter fetus subsp. fetus (strain 82-40) protein is Large ribosomal subunit protein bL17.